We begin with the raw amino-acid sequence, 199 residues long: Outer-membrane lipoprotein LolB (199 aa).

The N-terminal stretch at 1–28 is a signal peptide; it reads MAAAGSLCQTAWRVRGWLAAGLCALLAG. C29 carries the N-palmitoyl cysteine lipid modification. Residue C29 is the site of S-diacylglycerol cysteine attachment.

It belongs to the LolB family. In terms of assembly, monomer.

The protein localises to the cell outer membrane. Its function is as follows. Plays a critical role in the incorporation of lipoproteins in the outer membrane after they are released by the LolA protein. The protein is Outer-membrane lipoprotein LolB of Bordetella petrii (strain ATCC BAA-461 / DSM 12804 / CCUG 43448).